Consider the following 332-residue polypeptide: Phospho-N-acetylmuramoyl-pentapeptide-transferase (332 aa).

The next 8 membrane-spanning stretches (helical) occupy residues 9 to 29 (IYTI…IIPF), 55 to 75 (TIGG…AGLI), 79 to 99 (LWVA…DDFI), 115 to 135 (MSLQ…ISVM), 155 to 175 (IPQY…VVVA), 196 to 216 (IVAA…LAIF), 253 to 273 (AVAI…IYFA), and 312 to 332 (VVIV…LGLN).

Belongs to the glycosyltransferase 4 family. MraY subfamily. Mg(2+) serves as cofactor.

The protein resides in the cell membrane. It catalyses the reaction UDP-N-acetyl-alpha-D-muramoyl-L-alanyl-gamma-D-glutamyl-meso-2,6-diaminopimeloyl-D-alanyl-D-alanine + di-trans,octa-cis-undecaprenyl phosphate = di-trans,octa-cis-undecaprenyl diphospho-N-acetyl-alpha-D-muramoyl-L-alanyl-D-glutamyl-meso-2,6-diaminopimeloyl-D-alanyl-D-alanine + UMP. It functions in the pathway cell wall biogenesis; peptidoglycan biosynthesis. Its function is as follows. Catalyzes the initial step of the lipid cycle reactions in the biosynthesis of the cell wall peptidoglycan: transfers peptidoglycan precursor phospho-MurNAc-pentapeptide from UDP-MurNAc-pentapeptide onto the lipid carrier undecaprenyl phosphate, yielding undecaprenyl-pyrophosphoryl-MurNAc-pentapeptide, known as lipid I. The protein is Phospho-N-acetylmuramoyl-pentapeptide-transferase of Alkaliphilus oremlandii (strain OhILAs) (Clostridium oremlandii (strain OhILAs)).